A 195-amino-acid chain; its full sequence is Putative NADH dehydrogenase/NAD(P)H nitroreductase Caul_0018 (195 aa).

The protein belongs to the nitroreductase family. HadB/RutE subfamily. Requires FMN as cofactor.

This chain is Putative NADH dehydrogenase/NAD(P)H nitroreductase Caul_0018, found in Caulobacter sp. (strain K31).